A 236-amino-acid polypeptide reads, in one-letter code: Rab-like protein 3 (236 aa).

The tract at residues 1 to 235 (MASLDRVKVL…GGGALKNFHC (235 aa)) is small GTPase-like. Residues 16–21 (GVGKSS), 148–150 (KLD), and 179–180 (DC) each bind GTP.

Belongs to the small GTPase superfamily. Rab family. As to quaternary structure, homodimer. Interacts with GPR89; the interaction stabilizes GPR89. Interacts with RAP1GDS1.

Its function is as follows. Required for KRAS signaling regulation and modulation of cell proliferation. Regulator of KRAS prenylation, and probably prenylation of other small GTPases. Required for lymphocyte development and function. Not required for myeloid cell development. This is Rab-like protein 3 (Rabl3) from Mus musculus (Mouse).